The sequence spans 167 residues: Phosphopantetheine adenylyltransferase (167 aa).

S9 contacts substrate. Residues 9–10 and H17 contribute to the ATP site; that span reads SF. Substrate-binding residues include K41, V78, and R92. ATP contacts are provided by residues 93 to 95, E103, and 128 to 134; these read GLR and SRPITAT.

Belongs to the bacterial CoaD family. Homohexamer. The cofactor is Mg(2+).

It localises to the cytoplasm. It catalyses the reaction (R)-4'-phosphopantetheine + ATP + H(+) = 3'-dephospho-CoA + diphosphate. It participates in cofactor biosynthesis; coenzyme A biosynthesis; CoA from (R)-pantothenate: step 4/5. Functionally, reversibly transfers an adenylyl group from ATP to 4'-phosphopantetheine, yielding dephospho-CoA (dPCoA) and pyrophosphate. The polypeptide is Phosphopantetheine adenylyltransferase (Rhizobium rhizogenes (strain K84 / ATCC BAA-868) (Agrobacterium radiobacter)).